The chain runs to 160 residues: 2-C-methyl-D-erythritol 2,4-cyclodiphosphate synthase (160 aa).

A divalent metal cation contacts are provided by D9 and H11. 4-CDP-2-C-methyl-D-erythritol 2-phosphate-binding positions include 9-11 and 35-36; these read DVH and HS. Residue H43 participates in a divalent metal cation binding. 4-CDP-2-C-methyl-D-erythritol 2-phosphate is bound by residues 57-59, 62-66, 101-107, 133-136, F140, and R143; these read DIG, FPDTD, AQKPKMA, and TTTE.

Belongs to the IspF family. In terms of assembly, homotrimer. A divalent metal cation is required as a cofactor.

It carries out the reaction 4-CDP-2-C-methyl-D-erythritol 2-phosphate = 2-C-methyl-D-erythritol 2,4-cyclic diphosphate + CMP. It participates in isoprenoid biosynthesis; isopentenyl diphosphate biosynthesis via DXP pathway; isopentenyl diphosphate from 1-deoxy-D-xylulose 5-phosphate: step 4/6. Functionally, involved in the biosynthesis of isopentenyl diphosphate (IPP) and dimethylallyl diphosphate (DMAPP), two major building blocks of isoprenoid compounds. Catalyzes the conversion of 4-diphosphocytidyl-2-C-methyl-D-erythritol 2-phosphate (CDP-ME2P) to 2-C-methyl-D-erythritol 2,4-cyclodiphosphate (ME-CPP) with a corresponding release of cytidine 5-monophosphate (CMP). The sequence is that of 2-C-methyl-D-erythritol 2,4-cyclodiphosphate synthase from Geobacillus thermodenitrificans (strain NG80-2).